Here is a 1045-residue protein sequence, read N- to C-terminus: Cation efflux system protein CusA (1045 aa).

The next 12 membrane-spanning stretches (helical) occupy residues 14-34 (FLVL…IINT), 336-356 (LSGK…LFLW), 361-381 (ALVA…VMHF), 388-408 (IMSL…AIVM), 444-464 (VGPA…PIFT), 483-503 (AMAG…GYWI), 530-550 (VLHW…TVLW), 869-889 (KLKL…YLAF), 896-916 (LLII…LWWM), 926-946 (TGFI…LMYL), 983-1003 (AMTV…TGAG), and 1010-1030 (IAAP…FIIP).

This sequence belongs to the resistance-nodulation-cell division (RND) (TC 2.A.6) family. As to quaternary structure, the cus efflux system is composed of CusA, CusB, CusC and CusF.

Its subcellular location is the cell inner membrane. Functionally, part of a cation efflux system that mediates resistance to copper and silver. The polypeptide is Cation efflux system protein CusA (cusA) (Escherichia coli O157:H7).